Consider the following 221-residue polypeptide: Large ribosomal subunit protein uL3 (221 aa).

Positions 131 to 165 are disordered; it reads HNQSRGPETHGSRHHRRPGSMGPIKGKIKGKKLPG.

Belongs to the universal ribosomal protein uL3 family. Part of the 50S ribosomal subunit. Forms a cluster with proteins L14 and L19.

Functionally, one of the primary rRNA binding proteins, it binds directly near the 3'-end of the 23S rRNA, where it nucleates assembly of the 50S subunit. This chain is Large ribosomal subunit protein uL3, found in Phytoplasma australiense.